The sequence spans 234 residues: GTP-binding protein YPT52 (234 aa).

GTP-binding positions include 10–17, 66–70, and 111–114; these read GDSSVGKS, DTAGQ, and NKVG. Disordered stretches follow at residues 131 to 151 and 206 to 234; these read QETPSTETSPDSNEGGDEEQK and NRQIGGGNNGQVDINLQRPSTNDPTSCCS. Over residues 132-142 the composition is skewed to polar residues; it reads ETPSTETSPDS. 2 positions are modified to phosphoserine: Ser-139 and Ser-142. Lys-151 participates in a covalent cross-link: Glycyl lysine isopeptide (Lys-Gly) (interchain with G-Cter in ubiquitin). Over residues 217 to 234 the composition is skewed to polar residues; sequence VDINLQRPSTNDPTSCCS. S-geranylgeranyl cysteine attachment occurs at residues Cys-232 and Cys-233.

Belongs to the small GTPase superfamily. Rab family. In terms of assembly, interacts with ROY1, YIF1, YIP3, YIP4 and YIP5.

The protein resides in the cell membrane. It localises to the endoplasmic reticulum. In terms of biological role, required for transport in the endocytic pathway and for correct sorting of the vacuolar hydrolases suggesting a possible intersection of the endocytic with the vacuolar sorting pathway. May be involved in recruiting the MON1-CCZ1 complex to membranes enriched in phosphatidylinositol 3-phosphate (PtdIns[3]P) or other charged lipids, leading to recruitment of YPT7. The polypeptide is GTP-binding protein YPT52 (YPT52) (Saccharomyces cerevisiae (strain ATCC 204508 / S288c) (Baker's yeast)).